An 826-amino-acid chain; its full sequence is Villin-1 (826 aa).

The interval 1 to 734 (MVELSKKVTG…YDELKAELGD (734 aa)) is core. The Gelsolin-like 1 repeat unit spans residues 27-76 (MEMVPVPTKSYGNFYEGDCYVLLSTRKTGSGFSYNIHYWLGKNSSQDEQG). 112–119 (KQGLIYKQ) provides a ligand contact to a 1,2-diacyl-sn-glycero-3-phospho-(1D-myo-inositol-4,5-bisphosphate). A crucial for binding an actin filament region spans residues 129–137 (VETNTYNVQ). 138 to 146 (RLLHVKGKK) contributes to the a 1,2-diacyl-sn-glycero-3-phospho-(1D-myo-inositol-4,5-bisphosphate) binding site. 5 Gelsolin-like repeats span residues 148–188 (VVAA…AERL), 265–309 (LVIQ…EEKQ), 408–457 (QELV…DELA), 528–568 (TKAF…DERE), and 631–672 (FLAT…SEKE). A headpiece region spans residues 735–826 (NASIGQLVSG…QNLKKEKGLF (92 aa)). Residues 760-826 (PTKLETFPLD…QNLKKEKGLF (67 aa)) form the HP domain. Residues 820 to 823 (KKEK) are absolutely required for activity.

Belongs to the villin/gelsolin family. As to quaternary structure, monomer. Homodimer. Associates with F-actin; the association with F-actin is inhibited by tropomyosin. In terms of processing, phosphorylated on tyrosine residues. The unphosphorylated form increases the initial rate of actin-nucleating activity, whereas the tyrosine-phosphorylated form inhibits actin-nucleating activity, enhances actin-bundling activity and enhances actin-severing activity by reducing high Ca(2+) requirements. The tyrosine-phosphorylated form does not regulate actin-capping activity. Tyrosine phosphorylation is essential for cell migration: tyrosine phosphorylation sites in the N-terminus half regulate actin reorganization and cell morphology, whereas tyrosine phosphorylation sites in the C-terminus half regulate cell migration. Tyrosine phosphorylation is induced by epidermal growth factor (EGF) and stimulates cell migration. In terms of tissue distribution, specifically expressed in epithelial cells. Component of brush border microvilli.

The protein localises to the cytoplasm. It is found in the cytoskeleton. Its subcellular location is the cell projection. The protein resides in the microvillus. It localises to the lamellipodium. The protein localises to the ruffle. It is found in the filopodium tip. Its subcellular location is the filopodium. Epithelial cell-specific Ca(2+)-regulated actin-modifying protein that modulates the reorganization of microvillar actin filaments. Plays a role in the actin nucleation, actin filament bundle assembly, actin filament capping and severing. Binds phosphatidylinositol 4,5-bisphosphate (PIP2) and lysophosphatidic acid (LPA); binds LPA with higher affinity than PIP2. Binding to LPA increases its phosphorylation by SRC and inhibits all actin-modifying activities. Binding to PIP2 inhibits actin-capping and -severing activities but enhances actin-bundling activity. Regulates the intestinal epithelial cell morphology, cell invasion, cell migration and apoptosis. Protects against apoptosis induced by dextran sodium sulfate (DSS) in the gastrointestinal epithelium. Appears to regulate cell death by maintaining mitochondrial integrity. Enhances hepatocyte growth factor (HGF)-induced epithelial cell motility, chemotaxis and wound repair. Its actin-bundling activity is inhibited by tropomyosin. This chain is Villin-1 (VIL1), found in Gallus gallus (Chicken).